Reading from the N-terminus, the 169-residue chain is Proepiregulin (169 aa).

The first 29 residues, 1-29 (MTAGRRMEMLCAGRVPALLLCLGFHLLQA), serve as a signal peptide directing secretion. Residues 30-62 (VLSTTVIPSCIPGESSDNCTALVQTEDNPRVAQ) constitute a propeptide that is removed on maturation. Asparagine 47 carries an N-linked (GlcNAc...) asparagine glycan. Residues 60–119 (VAQVSITKCSSDMNGYCLHGQCIYLVDMSQNYCRCEVGYTGVRCEHFFLTVHQPLSKEYV) are Extracellular-facing. One can recognise an EGF-like domain in the interval 64-104 (SITKCSSDMNGYCLHGQCIYLVDMSQNYCRCEVGYTGVRCE). 3 cysteine pairs are disulfide-bonded: cysteine 68/cysteine 81, cysteine 76/cysteine 92, and cysteine 94/cysteine 103. The propeptide at 109–169 (TVHQPLSKEY…TSGDPELPQV (61 aa)) is removed in mature form. A helical membrane pass occupies residues 120–140 (ALTVILIILFLITVVGSTYYF). The Cytoplasmic portion of the chain corresponds to 141-169 (CRWYRNRKSKEPKKEYERVTSGDPELPQV).

In terms of assembly, interacts with EGFR and ERBB4. As to expression, in normal adults, expressed predominantly in the placenta and peripheral blood leukocytes. High levels were detected in carcinomas of the bladder, lung, kidney and colon.

It localises to the secreted. The protein resides in the extracellular space. The protein localises to the cell membrane. Functionally, ligand of the EGF receptor/EGFR and ERBB4. Stimulates EGFR and ERBB4 tyrosine phosphorylation. Contributes to inflammation, wound healing, tissue repair, and oocyte maturation by regulating angiogenesis and vascular remodeling and by stimulating cell proliferation. The sequence is that of Proepiregulin (EREG) from Homo sapiens (Human).